Here is a 293-residue protein sequence, read N- to C-terminus: ATP synthase gamma chain (293 aa).

The protein belongs to the ATPase gamma chain family. F-type ATPases have 2 components, CF(1) - the catalytic core - and CF(0) - the membrane proton channel. CF(1) has five subunits: alpha(3), beta(3), gamma(1), delta(1), epsilon(1). CF(0) has three main subunits: a, b and c.

The protein resides in the cell membrane. Produces ATP from ADP in the presence of a proton gradient across the membrane. The gamma chain is believed to be important in regulating ATPase activity and the flow of protons through the CF(0) complex. The chain is ATP synthase gamma chain from Streptococcus agalactiae serotype III (strain NEM316).